Consider the following 344-residue polypeptide: Arginine N-succinyltransferase (344 aa).

Residue L125 participates in succinyl-CoA binding. Residue H229 is the Proton donor of the active site.

The protein belongs to the arginine N-succinyltransferase family.

It carries out the reaction succinyl-CoA + L-arginine = N(2)-succinyl-L-arginine + CoA + H(+). Its pathway is amino-acid degradation; L-arginine degradation via AST pathway; L-glutamate and succinate from L-arginine: step 1/5. In terms of biological role, catalyzes the transfer of succinyl-CoA to arginine to produce N(2)-succinylarginine. This Salmonella dublin (strain CT_02021853) protein is Arginine N-succinyltransferase.